A 283-amino-acid polypeptide reads, in one-letter code: MPHRKERPSGSSLHAHGSTGTAEGGSMSRLSLTRSPVSPLAAQGIPLPAQLTKSNAPVHIDVGGHMYTSSLATLTKYPDSRISRLFNGTEPIVLDSLKQHYFIDRDGEIFRYVLSFLRTSKLLLPDDFKDFSLLYEEARYYQLQPMVRELERWQQEQEQRRRSRACDCLVVRVTPDLGERIALSGEKALIEEVFPETGDVMCNSVNAGWNQDPTHVIRFPLNGYCRLNSVQVLERLFQRGFSVAASCGGGVDSSQFSEYVLCREERRPQPTPTAVRIKQEPLD.

The segment at 1–33 (MPHRKERPSGSSLHAHGSTGTAEGGSMSRLSLT) is disordered. A phosphoserine mark is found at serine 31, serine 35, and serine 38. One can recognise a BTB domain in the interval 56 to 126 (APVHIDVGGH…LRTSKLLLPD (71 aa)).

Forms oligomers, predominantly homopentamers. Interacts with KCTD1, probably forming heteropentamers depending on its abundance in a cell-type dependent manner. Interacts with TFAP2A; this interaction inhibits TFAP2A transcriptional activation.

The protein resides in the nucleus. Its function is as follows. During embryonic development, interferes with neural crest formation. Inhibits AP2 transcriptional activity by interaction with its activation domain. In Bos taurus (Bovine), this protein is BTB/POZ domain-containing protein KCTD15 (KCTD15).